A 512-amino-acid chain; its full sequence is Sucrose-6-phosphate hydrolase (512 aa).

Residues 40-43 (WMND), Gln-59, Trp-67, 102-103 (FS), 165-166 (RD), Glu-229, and Trp-311 each bind substrate. Residue Asp-43 is part of the active site.

It belongs to the glycosyl hydrolase 32 family.

The protein localises to the cytoplasm. The enzyme catalyses Hydrolysis of terminal non-reducing beta-D-fructofuranoside residues in beta-D-fructofuranosides.. It functions in the pathway glycan biosynthesis; sucrose metabolism. In Zymomonas mobilis subsp. mobilis (strain ATCC 31821 / ZM4 / CP4), this protein is Sucrose-6-phosphate hydrolase (sacA).